The chain runs to 207 residues: Thiamine-phosphate synthase (207 aa).

Residues 36-40 (QLRMK) and Asn68 contribute to the 4-amino-2-methyl-5-(diphosphooxymethyl)pyrimidine site. 2 residues coordinate Mg(2+): Asp69 and Asp88. Ser106 lines the 4-amino-2-methyl-5-(diphosphooxymethyl)pyrimidine pocket. 132 to 134 (TNT) contacts 2-[(2R,5Z)-2-carboxy-4-methylthiazol-5(2H)-ylidene]ethyl phosphate. Residue Lys135 coordinates 4-amino-2-methyl-5-(diphosphooxymethyl)pyrimidine. Residues Gly162 and 182–183 (VS) each bind 2-[(2R,5Z)-2-carboxy-4-methylthiazol-5(2H)-ylidene]ethyl phosphate.

The protein belongs to the thiamine-phosphate synthase family. Mg(2+) serves as cofactor.

It catalyses the reaction 2-[(2R,5Z)-2-carboxy-4-methylthiazol-5(2H)-ylidene]ethyl phosphate + 4-amino-2-methyl-5-(diphosphooxymethyl)pyrimidine + 2 H(+) = thiamine phosphate + CO2 + diphosphate. The catalysed reaction is 2-(2-carboxy-4-methylthiazol-5-yl)ethyl phosphate + 4-amino-2-methyl-5-(diphosphooxymethyl)pyrimidine + 2 H(+) = thiamine phosphate + CO2 + diphosphate. It carries out the reaction 4-methyl-5-(2-phosphooxyethyl)-thiazole + 4-amino-2-methyl-5-(diphosphooxymethyl)pyrimidine + H(+) = thiamine phosphate + diphosphate. It functions in the pathway cofactor biosynthesis; thiamine diphosphate biosynthesis; thiamine phosphate from 4-amino-2-methyl-5-diphosphomethylpyrimidine and 4-methyl-5-(2-phosphoethyl)-thiazole: step 1/1. Condenses 4-methyl-5-(beta-hydroxyethyl)thiazole monophosphate (THZ-P) and 2-methyl-4-amino-5-hydroxymethyl pyrimidine pyrophosphate (HMP-PP) to form thiamine monophosphate (TMP). This is Thiamine-phosphate synthase from Methanococcus maripaludis (strain C6 / ATCC BAA-1332).